Reading from the N-terminus, the 207-residue chain is Large ribosomal subunit protein uL4 (207 aa).

A disordered region spans residues 43–85 (SRRQGTHDTKGRSEVRGGGRKPWKQKGTGRARQGSIRSPQWVG). The segment covering 47 to 59 (GTHDTKGRSEVRG) has biased composition (basic and acidic residues). Over residues 60–71 (GGRKPWKQKGTG) the composition is skewed to basic residues.

Belongs to the universal ribosomal protein uL4 family. Part of the 50S ribosomal subunit.

One of the primary rRNA binding proteins, this protein initially binds near the 5'-end of the 23S rRNA. It is important during the early stages of 50S assembly. It makes multiple contacts with different domains of the 23S rRNA in the assembled 50S subunit and ribosome. In terms of biological role, forms part of the polypeptide exit tunnel. This chain is Large ribosomal subunit protein uL4, found in Exiguobacterium sibiricum (strain DSM 17290 / CCUG 55495 / CIP 109462 / JCM 13490 / 255-15).